We begin with the raw amino-acid sequence, 481 residues long: Glutamyl-tRNA(Gln) amidotransferase subunit A (481 aa).

Catalysis depends on charge relay system residues Lys-76 and Ser-151. The active-site Acyl-ester intermediate is Ser-175.

It belongs to the amidase family. GatA subfamily. In terms of assembly, heterotrimer of A, B and C subunits.

It catalyses the reaction L-glutamyl-tRNA(Gln) + L-glutamine + ATP + H2O = L-glutaminyl-tRNA(Gln) + L-glutamate + ADP + phosphate + H(+). Allows the formation of correctly charged Gln-tRNA(Gln) through the transamidation of misacylated Glu-tRNA(Gln) in organisms which lack glutaminyl-tRNA synthetase. The reaction takes place in the presence of glutamine and ATP through an activated gamma-phospho-Glu-tRNA(Gln). This is Glutamyl-tRNA(Gln) amidotransferase subunit A from Neisseria meningitidis serogroup B (strain ATCC BAA-335 / MC58).